Consider the following 186-residue polypeptide: Shikimate kinase (186 aa).

21-26 (GVGKTT) lines the ATP pocket. T25 serves as a coordination point for Mg(2+). Substrate is bound by residues D43, R67, and G90. ATP is bound at residue R129. Residue R147 participates in substrate binding.

Belongs to the shikimate kinase family. Monomer. It depends on Mg(2+) as a cofactor.

It is found in the cytoplasm. It carries out the reaction shikimate + ATP = 3-phosphoshikimate + ADP + H(+). Its pathway is metabolic intermediate biosynthesis; chorismate biosynthesis; chorismate from D-erythrose 4-phosphate and phosphoenolpyruvate: step 5/7. Its function is as follows. Catalyzes the specific phosphorylation of the 3-hydroxyl group of shikimic acid using ATP as a cosubstrate. This Bacillus subtilis (strain 168) protein is Shikimate kinase.